The following is a 238-amino-acid chain: Uridylate kinase (238 aa).

12-15 (KLSG) is a binding site for ATP. G54 contacts UMP. Residues G55 and R59 each contribute to the ATP site. Residues D74 and 135-142 (TGNPFFTT) contribute to the UMP site. Residues T162, Y168, and D171 each coordinate ATP.

This sequence belongs to the UMP kinase family. As to quaternary structure, homohexamer.

It localises to the cytoplasm. The catalysed reaction is UMP + ATP = UDP + ADP. The protein operates within pyrimidine metabolism; CTP biosynthesis via de novo pathway; UDP from UMP (UMPK route): step 1/1. With respect to regulation, inhibited by UTP. Its function is as follows. Catalyzes the reversible phosphorylation of UMP to UDP. The sequence is that of Uridylate kinase from Bordetella bronchiseptica (strain ATCC BAA-588 / NCTC 13252 / RB50) (Alcaligenes bronchisepticus).